The following is a 224-amino-acid chain: Large ribosomal subunit protein uL3 (224 aa).

Residues 132-153 (SQTKTHGTHEYQRHPGAIGQRK) are disordered.

It belongs to the universal ribosomal protein uL3 family. As to quaternary structure, part of the 50S ribosomal subunit. Forms a cluster with proteins L14 and L19.

One of the primary rRNA binding proteins, it binds directly near the 3'-end of the 23S rRNA, where it nucleates assembly of the 50S subunit. The chain is Large ribosomal subunit protein uL3 from Myxococcus xanthus (strain DK1622).